We begin with the raw amino-acid sequence, 360 residues long: Magnesium-protoporphyrin IX monomethyl ester [oxidative] cyclase (360 aa).

Residues Met1–Lys20 are disordered.

Belongs to the AcsF family. The cofactor is Fe cation.

The catalysed reaction is Mg-protoporphyrin IX 13-monomethyl ester + 3 NADPH + 3 O2 + 2 H(+) = 3,8-divinyl protochlorophyllide a + 3 NADP(+) + 5 H2O. The protein operates within porphyrin-containing compound metabolism; chlorophyll biosynthesis (light-independent). Catalyzes the formation of the isocyclic ring in chlorophyll biosynthesis. Mediates the cyclase reaction, which results in the formation of divinylprotochlorophyllide (Pchlide) characteristic of all chlorophylls from magnesium-protoporphyrin IX 13-monomethyl ester (MgPMME). This chain is Magnesium-protoporphyrin IX monomethyl ester [oxidative] cyclase, found in Synechococcus sp. (strain RCC307).